The chain runs to 332 residues: Glyceraldehyde-3-phosphate dehydrogenase 1 (332 aa).

NAD(+) contacts are provided by residues 11-12, aspartate 32, and arginine 77; that span reads RI. D-glyceraldehyde 3-phosphate-binding positions include 148-150, threonine 179, 208-209, and arginine 231; these read SCT and TG. Cysteine 149 serves as the catalytic Nucleophile. NAD(+) is bound at residue asparagine 313.

This sequence belongs to the glyceraldehyde-3-phosphate dehydrogenase family. In terms of assembly, homotetramer.

The protein resides in the cytoplasm. The catalysed reaction is D-glyceraldehyde 3-phosphate + phosphate + NAD(+) = (2R)-3-phospho-glyceroyl phosphate + NADH + H(+). The protein operates within carbohydrate degradation; glycolysis; pyruvate from D-glyceraldehyde 3-phosphate: step 1/5. The protein is Glyceraldehyde-3-phosphate dehydrogenase 1 (Gapdh1) of Drosophila melanogaster (Fruit fly).